A 343-amino-acid polypeptide reads, in one-letter code: Methionine import ATP-binding protein MetN (343 aa).

The region spanning 2–241 (IKLSNITKVF…PKTPLAQKFI (240 aa)) is the ABC transporter domain. 38–45 (GASGAGKS) provides a ligand contact to ATP.

The protein belongs to the ABC transporter superfamily. Methionine importer (TC 3.A.1.24) family. As to quaternary structure, the complex is composed of two ATP-binding proteins (MetN), two transmembrane proteins (MetI) and a solute-binding protein (MetQ).

The protein resides in the cell inner membrane. It catalyses the reaction L-methionine(out) + ATP + H2O = L-methionine(in) + ADP + phosphate + H(+). It carries out the reaction D-methionine(out) + ATP + H2O = D-methionine(in) + ADP + phosphate + H(+). In terms of biological role, part of the ABC transporter complex MetNIQ involved in methionine import. Responsible for energy coupling to the transport system. In Shigella boydii serotype 4 (strain Sb227), this protein is Methionine import ATP-binding protein MetN.